The chain runs to 317 residues: 17-beta-hydroxysteroid dehydrogenase type 6 (317 aa).

The N-terminal stretch at 1–17 (MWLYLAVLLGLYYLLRW) is a signal peptide. 33–57 (FITGCDSGFGNQLARQLDLRGLRVL) is an NAD(+) binding site. Asn71 and Asn161 each carry an N-linked (GlcNAc...) asparagine glycan. Ser164 lines the substrate pocket. Tyr176 acts as the Proton acceptor in catalysis.

This sequence belongs to the short-chain dehydrogenases/reductases (SDR) family.

It localises to the microsome membrane. Its subcellular location is the endoplasmic reticulum membrane. The enzyme catalyses all-trans-retinol--[retinol-binding protein] + NAD(+) = all-trans-retinal--[retinol-binding protein] + NADH + H(+). It carries out the reaction all-trans-retinol + NAD(+) = all-trans-retinal + NADH + H(+). It catalyses the reaction androsterone + NAD(+) = 5alpha-androstan-3,17-dione + NADH + H(+). The catalysed reaction is testosterone + NAD(+) = androst-4-ene-3,17-dione + NADH + H(+). The enzyme catalyses 5alpha-androstane-3alpha,17beta-diol + NAD(+) = 17beta-hydroxy-5alpha-androstan-3-one + NADH + H(+). It carries out the reaction 17beta-estradiol + NAD(+) = estrone + NADH + H(+). It catalyses the reaction 17beta-estradiol + NADP(+) = estrone + NADPH + H(+). The catalysed reaction is 3alpha-hydroxy-5alpha-pregnan-20-one + NAD(+) = 5alpha-pregnane-3,20-dione + NADH + H(+). The enzyme catalyses 5alpha-androstane-3beta,17beta-diol + NAD(+) = 17beta-hydroxy-5alpha-androstan-3-one + NADH + H(+). It carries out the reaction 3beta-hydroxy-5alpha-androstan-17-one + NAD(+) = 5alpha-androstan-3,17-dione + NADH + H(+). In terms of biological role, NAD-dependent oxidoreductase with broad substrate specificity that shows both oxidative and reductive activity (in vitro). Has 17-beta-hydroxysteroid dehydrogenase activity towards various steroids (in vitro). Converts 5-alpha-androstan-3-alpha,17-beta-diol to androsterone and estradiol to estrone (in vitro). Has 3-alpha-hydroxysteroid dehydrogenase activity towards androsterone (in vitro). Has retinol dehydrogenase activity towards all-trans-retinol (in vitro). Can convert androsterone to epi-androsterone. Androsterone is first oxidized to 5-alpha-androstane-3,17-dione and then reduced to epi-andosterone. Can act on both C-19 and C-21 3-alpha-hydroxysteroids. This is 17-beta-hydroxysteroid dehydrogenase type 6 (HSD17B6) from Bos taurus (Bovine).